The following is a 287-amino-acid chain: ATP synthase gamma chain (287 aa).

Belongs to the ATPase gamma chain family. F-type ATPases have 2 components, CF(1) - the catalytic core - and CF(0) - the membrane proton channel. CF(1) has five subunits: alpha(3), beta(3), gamma(1), delta(1), epsilon(1). CF(0) has three main subunits: a, b and c.

The protein resides in the cell membrane. In terms of biological role, produces ATP from ADP in the presence of a proton gradient across the membrane. The gamma chain is believed to be important in regulating ATPase activity and the flow of protons through the CF(0) complex. The sequence is that of ATP synthase gamma chain from Staphylococcus carnosus (strain TM300).